A 1791-amino-acid chain; its full sequence is Protein TIC 214 (1791 aa).

The next 6 membrane-spanning stretches (helical) occupy residues 19–39 (IINS…FSIG), 68–88 (FIAG…HLAL), 91–111 (PHTI…WNNH), 133–153 (VFLN…SSML), 176–196 (VGWL…LVWI), and 227–247 (IFSI…PSPI). Residues 1492-1511 (ASQVELESDKENKKNPESAL) form a disordered region. A compositionally biased stretch (basic and acidic residues) spans 1498-1511 (ESDKENKKNPESAL).

This sequence belongs to the TIC214 family. Part of the Tic complex.

The protein resides in the plastid. It localises to the chloroplast inner membrane. Its function is as follows. Involved in protein precursor import into chloroplasts. May be part of an intermediate translocation complex acting as a protein-conducting channel at the inner envelope. In Barbarea verna (Land cress), this protein is Protein TIC 214.